We begin with the raw amino-acid sequence, 228 residues long: L-ribulose-5-phosphate 4-epimerase UlaF (228 aa).

Substrate-binding positions include 26 to 27 (GN), 43 to 44 (SG), and 72 to 73 (SS). Zn(2+) is bound by residues Asp-74, His-93, and His-95. Asp-118 serves as the catalytic Proton donor/acceptor. Residue His-167 participates in Zn(2+) binding. Tyr-225 serves as the catalytic Proton donor/acceptor.

The protein belongs to the aldolase class II family. AraD/FucA subfamily. It depends on Zn(2+) as a cofactor.

The catalysed reaction is L-ribulose 5-phosphate = D-xylulose 5-phosphate. The protein operates within cofactor degradation; L-ascorbate degradation; D-xylulose 5-phosphate from L-ascorbate: step 4/4. Catalyzes the isomerization of L-ribulose 5-phosphate to D-xylulose 5-phosphate. Is involved in the anaerobic L-ascorbate utilization. The polypeptide is L-ribulose-5-phosphate 4-epimerase UlaF (Escherichia coli O8 (strain IAI1)).